The sequence spans 364 residues: MGSSFGKNFRVTTFGESHGGAVGVILDGCPPKLKINIDLIQNELDRRRPGQSKITTPRNEDDKLEILSGLKEGITLGTPIAMMVRNKDQRPGDYSNLEQVFRPSHADGTYHLKYGIQAGSGGGRASARETIGRVAAGAIAKQLLKNLFNTEILSWVKRIHDIDSQVNKNKLTLSKIDSNIVRCPDDKVAAKMIKRIKELQQDGDSCGGVIECLVKNVPSGLGMPVFDKLEADLAKALMSLPATKGFEIGSGFLGTYLRGSEHNDSFIESDDISKLKTISNNSGGIQGGISNGENIEMKIAFKPTATIGKEQKTVNADGKEVLMKAKGRHDPCVLPRAVPMVDSMVALVLADHLLLHQAQCSIIK.

Position 47 (R47) interacts with NADP(+). Residues 124 to 126, G287, 302 to 306, and R328 contribute to the FMN site; these read RAS and KPTAT.

Belongs to the chorismate synthase family. As to quaternary structure, homotetramer. FMNH2 serves as cofactor.

The catalysed reaction is 5-O-(1-carboxyvinyl)-3-phosphoshikimate = chorismate + phosphate. It participates in metabolic intermediate biosynthesis; chorismate biosynthesis; chorismate from D-erythrose 4-phosphate and phosphoenolpyruvate: step 7/7. Its function is as follows. Catalyzes the anti-1,4-elimination of the C-3 phosphate and the C-6 proR hydrogen from 5-enolpyruvylshikimate-3-phosphate (EPSP) to yield chorismate, which is the branch point compound that serves as the starting substrate for the three terminal pathways of aromatic amino acid biosynthesis. This reaction introduces a second double bond into the aromatic ring system. The chain is Chorismate synthase from Prochlorococcus marinus subsp. pastoris (strain CCMP1986 / NIES-2087 / MED4).